The sequence spans 408 residues: DNA polymerase processivity factor (408 aa).

The short motif at 344–353 (KKRRNLLTKR) is the Nuclear localization signal element.

Belongs to the herpesviridae DNA polymerase processivity factor family. As to quaternary structure, interacts with the DNA polymerase catalytic subunit. Interacts with the origin-binding protein.

The protein resides in the host nucleus. Its function is as follows. Plays an essential role in viral DNA replication by acting as the polymerase accessory subunit. Associates with the viral polymerase to increase its processivity and forms high-affinity direct interactions with DNA. Facilitates the origin-binding protein loading onto DNA thus increasing its ability to assemble into a functional complex capable of unwinding duplex DNA. In Varicella-zoster virus (strain Oka vaccine) (HHV-3), this protein is DNA polymerase processivity factor.